A 149-amino-acid polypeptide reads, in one-letter code: Secreted RxLR effector protein 17 (149 aa).

A signal peptide spans 1–24 (MRLFYFSAMSVIGLLARNNMVVVA). The short motif at 52–78 (RSLRTREKDIQDSTVAKDDAIKVEEDR) is the RxLR-dEER element.

This sequence belongs to the RxLR effector family.

It is found in the secreted. The protein resides in the host cytoplasm. It localises to the host nucleus. Its function is as follows. Effector that acts as a broad suppressor of cell death to interrupt plant immunity. Inhibits cell death induced by cell death-inducing proteins, including the PAMP elicitor INF1 from P.infestans. In Plasmopara viticola (Downy mildew of grapevine), this protein is Secreted RxLR effector protein 17.